We begin with the raw amino-acid sequence, 287 residues long: Mitochondrial dicarboxylate carrier (287 aa).

Solcar repeat units lie at residues 7–87 (SRWY…MRDY), 100–187 (NKVL…AKQL), and 196–279 (DNIF…LRKH). 3 helical membrane-spanning segments follow: residues 9–29 (WYFGGLASCGAACCTHPLDLL), 62–81 (GLSASLCRQMTYSLTRFAIY), and 102–122 (VLLGGISGLTGGFVGTPADLV). Position 158 is an N6-acetyllysine (Lys-158). The next 3 membrane-spanning stretches (helical) occupy residues 162-181 (GATMASSRGALVTVGQLSCY), 202-222 (FVSSFIAGGCATFLCQPLDVL), and 254-274 (GLFPAGIRLIPHTVLTFMFLE).

The protein belongs to the mitochondrial carrier (TC 2.A.29) family. Expressed at very high levels in white adipose tissue. And at low levels in brown adipose tissue, kidney and liver.

It is found in the mitochondrion inner membrane. The catalysed reaction is (S)-malate(in) + phosphate(out) = (S)-malate(out) + phosphate(in). The enzyme catalyses malonate(out) + (S)-malate(in) = malonate(in) + (S)-malate(out). It catalyses the reaction (S)-malate(in) + succinate(out) = (S)-malate(out) + succinate(in). It carries out the reaction (S)-malate(in) + sulfate(out) = (S)-malate(out) + sulfate(in). The catalysed reaction is malonate(out) + phosphate(in) = malonate(in) + phosphate(out). The enzyme catalyses succinate(out) + phosphate(in) = succinate(in) + phosphate(out). It catalyses the reaction sulfate(out) + phosphate(in) = sulfate(in) + phosphate(out). It carries out the reaction malonate(out) + succinate(in) = malonate(in) + succinate(out). Regulated by circadian protein CLOCK (Circadian Locomotor Output Cycles Kaput). Catalyzes the electroneutral exchange or flux of physiologically important metabolites such as dicarboxylates (malonate, malate, succinate), inorganic sulfur-containing anions, and phosphate, across mitochondrial inner membrane. Plays an important role in gluconeogenesis, fatty acid metabolism, urea synthesis, and sulfur metabolism, particularly in liver, by supplying the substrates for the different metabolic processes. Regulates fatty acid release from adipocytes, and contributes to systemic insulin sensitivity. This chain is Mitochondrial dicarboxylate carrier, found in Mus musculus (Mouse).